The following is a 275-amino-acid chain: Sulfate transporter CysZ (275 aa).

The interval 1–24 (MSSEKSSFPEKPPSFEKPSHSNTA) is disordered. A compositionally biased stretch (basic and acidic residues) spans 13-24 (PSFEKPSHSNTA). 4 consecutive transmembrane segments (helical) span residues 49–69 (FVILPLLMNIVLMGGAFWWLF), 93–113 (LIWPLAVLSILLVFSYLFSTI), 169–189 (IVLLLLYFIPGIGQTVAPVLW), and 232–252 (ALVSLFTLVPFLNLVIMPVAV).

Belongs to the CysZ family.

Its subcellular location is the cell inner membrane. Its function is as follows. High affinity, high specificity proton-dependent sulfate transporter, which mediates sulfate uptake. Provides the sulfur source for the cysteine synthesis pathway. The chain is Sulfate transporter CysZ from Pectobacterium atrosepticum (strain SCRI 1043 / ATCC BAA-672) (Erwinia carotovora subsp. atroseptica).